The primary structure comprises 183 residues: Ion-translocating oxidoreductase complex subunit B (183 aa).

Residues 1 to 23 (MLSALLVMAAIAVVLGAALGFAA) are hydrophobic. Residues 29 to 88 (EGDPLVDKIDAILPQTQCGQCGYPGCKPYAQAIAQGEADINQCPPGGEEGVRKLADLLGR) form the 4Fe-4S domain. Positions 46, 49, 54, 71, 113, 116, 119, 123, 143, 146, 149, and 153 each coordinate [4Fe-4S] cluster. 2 consecutive 4Fe-4S ferredoxin-type domains span residues 104 to 133 (AVAYIDENVCIGCTLCLQACPVDAIVGAAK) and 135 to 163 (MHTVVDPLCTGCELCVAPCPVDCIYMEPV).

It belongs to the 4Fe4S bacterial-type ferredoxin family. RnfB subfamily. In terms of assembly, the complex is composed of six subunits: RnfA, RnfB, RnfC, RnfD, RnfE and RnfG. [4Fe-4S] cluster serves as cofactor.

It localises to the cell inner membrane. In terms of biological role, part of a membrane-bound complex that couples electron transfer with translocation of ions across the membrane. This is Ion-translocating oxidoreductase complex subunit B from Azoarcus sp. (strain BH72).